The primary structure comprises 289 residues: Phosphatidylglycerol--prolipoprotein diacylglyceryl transferase (289 aa).

A run of 7 helical transmembrane segments spans residues 17–37 (LAVR…ILLG), 57–77 (MLFY…IFFY), 89–109 (IFAV…VIAA), 121–141 (WLVV…AGRI), 174–194 (QLYE…IYSA), 200–220 (GAVS…AEFF), and 235–255 (ISMG…MLVW). A 1,2-diacyl-sn-glycero-3-phospho-(1'-sn-glycerol) is bound at residue Arg140.

The protein belongs to the Lgt family.

The protein localises to the cell inner membrane. It catalyses the reaction L-cysteinyl-[prolipoprotein] + a 1,2-diacyl-sn-glycero-3-phospho-(1'-sn-glycerol) = an S-1,2-diacyl-sn-glyceryl-L-cysteinyl-[prolipoprotein] + sn-glycerol 1-phosphate + H(+). Its pathway is protein modification; lipoprotein biosynthesis (diacylglyceryl transfer). In terms of biological role, catalyzes the transfer of the diacylglyceryl group from phosphatidylglycerol to the sulfhydryl group of the N-terminal cysteine of a prolipoprotein, the first step in the formation of mature lipoproteins. In Nitrosospira multiformis (strain ATCC 25196 / NCIMB 11849 / C 71), this protein is Phosphatidylglycerol--prolipoprotein diacylglyceryl transferase.